The sequence spans 454 residues: tRNA(Ile)-lysidine synthase (454 aa).

Position 27-32 (27-32 (SGGSDS)) interacts with ATP.

This sequence belongs to the tRNA(Ile)-lysidine synthase family.

It is found in the cytoplasm. The enzyme catalyses cytidine(34) in tRNA(Ile2) + L-lysine + ATP = lysidine(34) in tRNA(Ile2) + AMP + diphosphate + H(+). Ligates lysine onto the cytidine present at position 34 of the AUA codon-specific tRNA(Ile) that contains the anticodon CAU, in an ATP-dependent manner. Cytidine is converted to lysidine, thus changing the amino acid specificity of the tRNA from methionine to isoleucine. The chain is tRNA(Ile)-lysidine synthase from Mesorhizobium japonicum (strain LMG 29417 / CECT 9101 / MAFF 303099) (Mesorhizobium loti (strain MAFF 303099)).